The chain runs to 135 residues: Large ribosomal subunit protein uL16c (135 aa).

Belongs to the universal ribosomal protein uL16 family. Part of the 50S ribosomal subunit.

The protein localises to the plastid. The protein resides in the chloroplast. This Nymphaea alba (White water-lily) protein is Large ribosomal subunit protein uL16c.